The primary structure comprises 504 residues: MKYTKTLLAMVLSATFCQAYAEDKVWISIGADANQTVMKSGAESILPNSVASSGQVWVGQVDVAQLAELSHNMHEEHNRCGGYMVHPSAQSAMAASAMPTTLASFVMPPITQQATVTAWLPQVDASQITGTISSLESFTNRFYTTTSGAQASDWIASEWQALSASLPNASVKQVSHSGYNQKSVVMTITGSEAPDEWIVIGGHLDSTIGSHTNEQSVAPGADDDASGIAAVTEVIRVLSENNFQPKRSIAFMAYAAEEVGLRGSQDLANQYKSEGKNVVSALQLDMTNYKGSAQDVVFITDYTDSNFTQYLTQLMDEYLPSLTYGFDTCGYACSDHASWHNAGYPAAMPFESKFNDYNPRIHTTQDTLANSDPTGSHAKKFTQLGLAYAIEMGSATGDTPTPGNQLEDGVPVTDLSGSRGSNVWYTFELETQKNLQITTSGGYGDLDLYVKFGSKASKQNWDCRPYLSGNNEVCTFNNASPGTYSVMLTGYSNYSGASLKASTF.

The signal sequence occupies residues 1–21; sequence MKYTKTLLAMVLSATFCQAYA. The propeptide occupies 22 to 106; sequence EDKVWISIGA…AMPTTLASFV (85 aa). Zn(2+) contacts are provided by His-203, Asp-223, Glu-258, and Asp-285. Cys-329 and Cys-333 are disulfide-bonded. His-362 contributes to the Zn(2+) binding site. Residues 406 to 504 constitute a propeptide, removed in mature form; the sequence is LEDGVPVTDL…SGASLKASTF (99 aa).

Belongs to the peptidase M28 family. M28E subfamily. It depends on Zn(2+) as a cofactor.

The protein localises to the secreted. It carries out the reaction Release of an N-terminal amino acid, preferentially leucine, but not glutamic or aspartic acids.. In Vibrio proteolyticus (Aeromonas proteolytica), this protein is Bacterial leucyl aminopeptidase.